The sequence spans 329 residues: Peroxidase 17 (329 aa).

Residues 1–19 (MSLLPHLILYLTLLTVVVT) form the signal peptide. 4 disulfides stabilise this stretch: cysteine 32/cysteine 112, cysteine 65/cysteine 70, cysteine 118/cysteine 315, and cysteine 197/cysteine 229. Histidine 63 serves as the catalytic Proton acceptor. Aspartate 64, valine 67, glycine 69, aspartate 71, and serine 73 together coordinate Ca(2+). A substrate-binding site is contributed by proline 160. Asparagine 165 and asparagine 177 each carry an N-linked (GlcNAc...) asparagine glycan. Heme b is bound at residue histidine 190. Serine 191 is a Ca(2+) binding site. N-linked (GlcNAc...) asparagine glycosylation is found at asparagine 206 and asparagine 236. The Ca(2+) site is built by aspartate 242, threonine 244, and aspartate 249.

This sequence belongs to the peroxidase family. Classical plant (class III) peroxidase subfamily. Requires heme b as cofactor. The cofactor is Ca(2+).

It is found in the secreted. It localises to the vacuole. The catalysed reaction is 2 a phenolic donor + H2O2 = 2 a phenolic radical donor + 2 H2O. In terms of biological role, removal of H(2)O(2), oxidation of toxic reductants, biosynthesis and degradation of lignin, suberization, auxin catabolism, response to environmental stresses such as wounding, pathogen attack and oxidative stress. These functions might be dependent on each isozyme/isoform in each plant tissue. This is Peroxidase 17 (PER17) from Arabidopsis thaliana (Mouse-ear cress).